The following is a 431-amino-acid chain: Adenylosuccinate synthetase 2 (431 aa).

Residues 13–19 (GDEGKGK) and 41–43 (GHT) contribute to the GTP site. The active-site Proton acceptor is Asp14. Mg(2+)-binding residues include Asp14 and Gly41. IMP is bound by residues 14–17 (DEGK), 39–42 (NAGH), Thr130, Arg144, Gln225, Thr240, and Arg304. Residue His42 is the Proton donor of the active site. 300-306 (SVTGRPR) contributes to the substrate binding site. GTP-binding positions include Arg306, 332-334 (KLD), and 414-416 (STG).

The protein belongs to the adenylosuccinate synthetase family. In terms of assembly, homodimer. The cofactor is Mg(2+).

Its subcellular location is the cytoplasm. The catalysed reaction is IMP + L-aspartate + GTP = N(6)-(1,2-dicarboxyethyl)-AMP + GDP + phosphate + 2 H(+). It functions in the pathway purine metabolism; AMP biosynthesis via de novo pathway; AMP from IMP: step 1/2. Its function is as follows. Plays an important role in the de novo pathway of purine nucleotide biosynthesis. Catalyzes the first committed step in the biosynthesis of AMP from IMP. In Chromobacterium violaceum (strain ATCC 12472 / DSM 30191 / JCM 1249 / CCUG 213 / NBRC 12614 / NCIMB 9131 / NCTC 9757 / MK), this protein is Adenylosuccinate synthetase 2.